Consider the following 124-residue polypeptide: Fluoride-specific ion channel FluC (124 aa).

3 helical membrane-spanning segments follow: residues 20-40 (LLSI…TLLV), 60-80 (ISPE…TTFS), and 102-122 (VLLN…LIFS). Residues Gly74 and Thr77 each coordinate Na(+).

This sequence belongs to the fluoride channel Fluc/FEX (TC 1.A.43) family.

It localises to the cell inner membrane. It carries out the reaction fluoride(in) = fluoride(out). Its activity is regulated as follows. Na(+) is not transported, but it plays an essential structural role and its presence is essential for fluoride channel function. Fluoride-specific ion channel. Important for reducing fluoride concentration in the cell, thus reducing its toxicity. This Shewanella frigidimarina (strain NCIMB 400) protein is Fluoride-specific ion channel FluC.